The following is a 219-amino-acid chain: Large ribosomal subunit protein uL3 (219 aa).

A disordered region spans residues 124–154 (FSGSIKRHNQSEGPKSHGSRYHRRPGSMGPI).

It belongs to the universal ribosomal protein uL3 family. Part of the 50S ribosomal subunit. Forms a cluster with proteins L14 and L19.

In terms of biological role, one of the primary rRNA binding proteins, it binds directly near the 3'-end of the 23S rRNA, where it nucleates assembly of the 50S subunit. The sequence is that of Large ribosomal subunit protein uL3 from Phytoplasma mali (strain AT).